Here is a 741-residue protein sequence, read N- to C-terminus: Ribosome-releasing factor 2, mitochondrial (741 aa).

Residues 1–29 (MLKYEFLHGLQKRSHYLRQLSGQFFSRSY) constitute a mitochondrion transit peptide. In terms of domain architecture, tr-type G spans 31–310 (SKIRNIGILA…AVNSYLPAPE (280 aa)). Residues 40–47 (AHIDAGKT), 104–108 (DTPGH), and 158–161 (NKMD) each bind GTP.

The protein belongs to the TRAFAC class translation factor GTPase superfamily. Classic translation factor GTPase family. EF-G/EF-2 subfamily.

The protein resides in the mitochondrion. In terms of biological role, mitochondrial GTPase that mediates the disassembly of ribosomes from messenger RNA at the termination of mitochondrial protein biosynthesis. Not involved in the GTP-dependent ribosomal translocation step during translation elongation. In Drosophila ananassae (Fruit fly), this protein is Ribosome-releasing factor 2, mitochondrial.